We begin with the raw amino-acid sequence, 359 residues long: Trans-enoyl reductase mpsG (359 aa).

The NADP(+) site is built by tyrosine 212, leucine 259, and threonine 278.

Belongs to the zinc-containing alcohol dehydrogenase family. In terms of assembly, monomer.

The protein operates within secondary metabolite biosynthesis. Functionally, trans-enoyl reductase; part of the gene cluster that mediates the biosynthesis of macrophasetins, 3-decalinoyltetramic acids (DTAs) which feature a tetramate (pyrrolidine-2,4-dione) unit connected to a decalin fragment and that have potent bioactivities. The PKS-NRPS mpsA together with its associated enoylreductase partner mpsG incorporate one unit of acetyl-CoA, seven units of malonyl-CoA, and one unit of L-alanine to assemble the linear tetramic acid intermediate corresponding to the backbone of macrophasetins. Without the Diels-Alderase mpsD, the mpsA/G product can undergo the non-enzymatic intramolecular Diels-Alder (IMDA) reaction to generate both macrophasetin A and macrophasetin B. Catalyzed by mpsD, the linear tetramic acid intermediate is thoroughly converted to macrophasetin A via the endo-IMDA reaction in a regioselective and stereoselective manner. Finally, the cytochrome P450 monooxygenase mpsF catalyzes the hydroxylation at C20 to yield the end product macrophasetin C. The sequence is that of Trans-enoyl reductase mpsG from Macrophomina phaseolina (strain MS6) (Charcoal rot fungus).